A 323-amino-acid polypeptide reads, in one-letter code: CYFIP-related Rac1 interactor A (323 aa).

It belongs to the CYRI family.

The protein resides in the membrane. Functionally, may negatively regulate RAC1 signaling and RAC1-driven cytoskeletal remodeling. May regulate chemotaxis, cell migration and epithelial polarization by controlling the polarity, plasticity, duration and extent of protrusions. The protein is CYFIP-related Rac1 interactor A (CYRIA) of Gallus gallus (Chicken).